The following is a 326-amino-acid chain: DnaJ homolog subfamily B member 6 (326 aa).

In terms of domain architecture, J spans Asp-3–Gly-69. The interval Ala-249–Tyr-326 is disordered. At Ser-277 the chain carries Phosphoserine.

Homooligomer.

It is found in the cytoplasm. It localises to the perinuclear region. Its subcellular location is the nucleus. Its function is as follows. Has a stimulatory effect on the ATPase activity of HSP70 in a dose-dependent and time-dependent manner and hence acts as a co-chaperone of HSP70. Plays an indispensable role in the organization of KRT8/KRT18 filaments. Acts as an endogenous molecular chaperone for neuronal proteins including huntingtin. Suppresses aggregation and toxicity of polyglutamine-containing, aggregation-prone proteins. Also reduces cellular toxicity and caspase-3 activity. In Gallus gallus (Chicken), this protein is DnaJ homolog subfamily B member 6.